Reading from the N-terminus, the 824-residue chain is Leucine--tRNA ligase (824 aa).

The 'HIGH' region motif lies at 41–51 (PYPSGTLHVGH). Residues 580–584 (KMSKS) carry the 'KMSKS' region motif. An ATP-binding site is contributed by Lys-583.

Belongs to the class-I aminoacyl-tRNA synthetase family.

The protein localises to the cytoplasm. It carries out the reaction tRNA(Leu) + L-leucine + ATP = L-leucyl-tRNA(Leu) + AMP + diphosphate. This Thermotoga maritima (strain ATCC 43589 / DSM 3109 / JCM 10099 / NBRC 100826 / MSB8) protein is Leucine--tRNA ligase.